Here is a 98-residue protein sequence, read N- to C-terminus: Feather keratin 3 (98 aa).

The protein belongs to the avian keratin family. As to quaternary structure, the avian keratins (F-ker, S-ker, C-ker and B-ker) are a complex mixture of very similar polypeptides.

The chain is Feather keratin 3 from Gallus gallus (Chicken).